A 348-amino-acid chain; its full sequence is MGVTGFSAFPCCGKNSVNIVERKNDDYHHHHHPLEDNKDEDNEMGTELSSMKPPPKVDPDPVPHLEDMVTELTSTPIPETENPEQQNYRIESIKPYEEELTTTNTFKPRGFNVNSTNKEEEEVVCGHFRSTPVQTSKHLFWSNKLIQASEHSLQTALEKHHKSPGEKKSISIAQVYTECTQRPSSTQVSRTPTPTALGLADLINFASSLAVASSSNMALPNLGTMIKGTSEKAQNTSLDFCQPIQSIKFTQATQITQISSEKQDEPPEVMAHKSWTQETRNVACSYLDINESGLKKATIQGEVKFVQAPATSPELQEDKDDSVPGTKKGTPILLKIHFKLSSPQAPEK.

The span at tyrosine 27–aspartate 36 shows a compositional bias: basic and acidic residues. The disordered stretch occupies residues tyrosine 27 to proline 61. Phosphoserine occurs at positions 149 and 152. A disordered region spans residues alanine 308–glycine 329. Threonine 330 bears the Phosphothreonine mark.

Interacts with syntaxin-1 and ACTB. Abundantly expressed in testes. Expressed in germ cells, but not in Sertoli or Leydig cells of the adult testis. Localized at the acrosomal region of the round and elongated spermatids at stages VIII-X.

This is Spermatogenesis-associated protein 32 (Spata32) from Rattus norvegicus (Rat).